The chain runs to 114 residues: Transmembrane protein 14DP (114 aa).

The next 4 helical transmembrane spans lie at 8 to 28 (LVPL…GGIV), 36 to 56 (APSL…AYQL), 63 to 80 (VWDF…IMGM), and 83 to 103 (YYYG…LMAA).

Belongs to the TMEM14 family.

Its subcellular location is the membrane. This Homo sapiens (Human) protein is Transmembrane protein 14DP (TMEM14DP).